Consider the following 327-residue polypeptide: Malate dehydrogenase (327 aa).

Position 12 to 18 (Gly12 to Ala18) interacts with NAD(+). 2 residues coordinate substrate: Arg93 and Arg99. NAD(+) contacts are provided by residues Asn106, Gln113, and Val130–Asn132. Residues Asn132 and Arg163 each coordinate substrate. The Proton acceptor role is filled by His188.

It belongs to the LDH/MDH superfamily. MDH type 2 family.

It carries out the reaction (S)-malate + NAD(+) = oxaloacetate + NADH + H(+). Catalyzes the reversible oxidation of malate to oxaloacetate. This Paraburkholderia phytofirmans (strain DSM 17436 / LMG 22146 / PsJN) (Burkholderia phytofirmans) protein is Malate dehydrogenase.